Here is a 407-residue protein sequence, read N- to C-terminus: Arginine biosynthesis bifunctional protein ArgJ (407 aa).

Substrate is bound by residues T157, K183, T194, E280, N402, and T407. T194 acts as the Nucleophile in catalysis.

The protein belongs to the ArgJ family. As to quaternary structure, heterotetramer of two alpha and two beta chains.

Its subcellular location is the cytoplasm. The enzyme catalyses N(2)-acetyl-L-ornithine + L-glutamate = N-acetyl-L-glutamate + L-ornithine. The catalysed reaction is L-glutamate + acetyl-CoA = N-acetyl-L-glutamate + CoA + H(+). Its pathway is amino-acid biosynthesis; L-arginine biosynthesis; L-ornithine and N-acetyl-L-glutamate from L-glutamate and N(2)-acetyl-L-ornithine (cyclic): step 1/1. It functions in the pathway amino-acid biosynthesis; L-arginine biosynthesis; N(2)-acetyl-L-ornithine from L-glutamate: step 1/4. Functionally, catalyzes two activities which are involved in the cyclic version of arginine biosynthesis: the synthesis of N-acetylglutamate from glutamate and acetyl-CoA as the acetyl donor, and of ornithine by transacetylation between N(2)-acetylornithine and glutamate. This is Arginine biosynthesis bifunctional protein ArgJ from Bacillus anthracis.